The following is a 136-amino-acid chain: Small ribosomal subunit protein uS9 (136 aa).

The segment covering P103–A116 has biased composition (basic and acidic residues). Residues P103 to R136 form a disordered region. Over residues K117–R136 the composition is skewed to basic residues.

The protein belongs to the universal ribosomal protein uS9 family.

The sequence is that of Small ribosomal subunit protein uS9 (rpsI) from Prochlorococcus marinus (strain SARG / CCMP1375 / SS120).